The primary structure comprises 382 residues: Mannitol-1-phosphate 5-dehydrogenase (382 aa).

3 to 14 serves as a coordination point for NAD(+); sequence ALHFGAGNIGRG.

Belongs to the mannitol dehydrogenase family.

The catalysed reaction is D-mannitol 1-phosphate + NAD(+) = beta-D-fructose 6-phosphate + NADH + H(+). The sequence is that of Mannitol-1-phosphate 5-dehydrogenase from Mannheimia succiniciproducens (strain KCTC 0769BP / MBEL55E).